The chain runs to 386 residues: Succinate--CoA ligase [ADP-forming] subunit beta (386 aa).

The ATP-grasp domain maps to 9 to 244; it reads KEVLRKYGVA…LDEEDPKEIE (236 aa). ATP is bound by residues Lys46, 53-55, Glu99, Cys102, and Glu107; that span reads GRG. The Mg(2+) site is built by Asn199 and Asp213. Substrate is bound by residues Asn264 and 321–323; that span reads GIM.

The protein belongs to the succinate/malate CoA ligase beta subunit family. Heterotetramer of two alpha and two beta subunits. It depends on Mg(2+) as a cofactor.

It carries out the reaction succinate + ATP + CoA = succinyl-CoA + ADP + phosphate. The enzyme catalyses GTP + succinate + CoA = succinyl-CoA + GDP + phosphate. The protein operates within carbohydrate metabolism; tricarboxylic acid cycle; succinate from succinyl-CoA (ligase route): step 1/1. Its function is as follows. Succinyl-CoA synthetase functions in the citric acid cycle (TCA), coupling the hydrolysis of succinyl-CoA to the synthesis of either ATP or GTP and thus represents the only step of substrate-level phosphorylation in the TCA. The beta subunit provides nucleotide specificity of the enzyme and binds the substrate succinate, while the binding sites for coenzyme A and phosphate are found in the alpha subunit. The polypeptide is Succinate--CoA ligase [ADP-forming] subunit beta (Bacillus licheniformis (strain ATCC 14580 / DSM 13 / JCM 2505 / CCUG 7422 / NBRC 12200 / NCIMB 9375 / NCTC 10341 / NRRL NRS-1264 / Gibson 46)).